A 482-amino-acid chain; its full sequence is 23S rRNA (uracil(1939)-C(5))-methyltransferase RlmD (482 aa).

4 residues coordinate [4Fe-4S] cluster: Cys-85, Cys-95, Cys-98, and Cys-177. S-adenosyl-L-methionine is bound by residues Gln-285, Phe-314, Asn-319, Glu-335, Asn-370, and Asp-391. The Nucleophile role is filled by Cys-438.

The protein belongs to the class I-like SAM-binding methyltransferase superfamily. RNA M5U methyltransferase family. RlmD subfamily.

It carries out the reaction uridine(1939) in 23S rRNA + S-adenosyl-L-methionine = 5-methyluridine(1939) in 23S rRNA + S-adenosyl-L-homocysteine + H(+). Functionally, catalyzes the formation of 5-methyl-uridine at position 1939 (m5U1939) in 23S rRNA. This is 23S rRNA (uracil(1939)-C(5))-methyltransferase RlmD from Acidovorax sp. (strain JS42).